The primary structure comprises 103 residues: uncharacterized protein (103 aa).

This is an uncharacterized protein from Methanocaldococcus jannaschii (strain ATCC 43067 / DSM 2661 / JAL-1 / JCM 10045 / NBRC 100440) (Methanococcus jannaschii).